The following is a 360-amino-acid chain: Photosystem II protein D1 (360 aa).

3 consecutive transmembrane segments (helical) span residues tyrosine 30 to alanine 47, histidine 119 to leucine 134, and tryptophan 143 to alanine 157. A chlorophyll a-binding site is contributed by histidine 119. A pheophytin a-binding site is contributed by tyrosine 127. Residues aspartate 171 and glutamate 190 each coordinate [CaMn4O5] cluster. The helical transmembrane segment at phenylalanine 198–leucine 219 threads the bilayer. Histidine 199 is a binding site for chlorophyll a. A quinone contacts are provided by residues histidine 216 and serine 265–phenylalanine 266. Histidine 216 is a Fe cation binding site. Position 273 (histidine 273) interacts with Fe cation. The chain crosses the membrane as a helical span at residues phenylalanine 275–methionine 289. Residues histidine 333, glutamate 334, aspartate 343, and alanine 345 each contribute to the [CaMn4O5] cluster site. Residues alanine 346–glycine 360 constitute a propeptide that is removed on maturation.

This sequence belongs to the reaction center PufL/M/PsbA/D family. In terms of assembly, PSII is composed of 1 copy each of membrane proteins PsbA, PsbB, PsbC, PsbD, PsbE, PsbF, PsbH, PsbI, PsbJ, PsbK, PsbL, PsbM, PsbT, PsbX, PsbY, Psb30/Ycf12, peripheral proteins PsbO, CyanoQ (PsbQ), PsbU, PsbV and a large number of cofactors. It forms dimeric complexes. It depends on The D1/D2 heterodimer binds P680, chlorophylls that are the primary electron donor of PSII, and subsequent electron acceptors. It shares a non-heme iron and each subunit binds pheophytin, quinone, additional chlorophylls, carotenoids and lipids. D1 provides most of the ligands for the Mn4-Ca-O5 cluster of the oxygen-evolving complex (OEC). There is also a Cl(-1) ion associated with D1 and D2, which is required for oxygen evolution. The PSII complex binds additional chlorophylls, carotenoids and specific lipids. as a cofactor. Tyr-162 forms a radical intermediate that is referred to as redox-active TyrZ, YZ or Y-Z. In terms of processing, C-terminally processed by CtpA; processing is essential to allow assembly of the oxygen-evolving complex and thus photosynthetic growth.

Its subcellular location is the cellular thylakoid membrane. The enzyme catalyses 2 a plastoquinone + 4 hnu + 2 H2O = 2 a plastoquinol + O2. Functionally, photosystem II (PSII) is a light-driven water:plastoquinone oxidoreductase that uses light energy to abstract electrons from H(2)O, generating O(2) and a proton gradient subsequently used for ATP formation. It consists of a core antenna complex that captures photons, and an electron transfer chain that converts photonic excitation into a charge separation. The D1/D2 (PsbA/PsbD) reaction center heterodimer binds P680, the primary electron donor of PSII as well as several subsequent electron acceptors. This Prochlorococcus marinus (strain MIT 9312) protein is Photosystem II protein D1.